Here is a 245-residue protein sequence, read N- to C-terminus: Probable phosphatase YPTB2019 (245 aa).

9 residues coordinate Zn(2+): H7, H9, H15, H40, E73, H101, H131, D192, and H194.

This sequence belongs to the PHP family. As to quaternary structure, homotrimer. Zn(2+) is required as a cofactor.

This Yersinia pseudotuberculosis serotype I (strain IP32953) protein is Probable phosphatase YPTB2019.